Reading from the N-terminus, the 252-residue chain is 3-dehydroquinate dehydratase (252 aa).

3-dehydroquinate contacts are provided by residues serine 21, 46-48 (EWR), and arginine 82. Histidine 143 serves as the catalytic Proton donor/acceptor. The active-site Schiff-base intermediate with substrate is the lysine 170. 3-dehydroquinate is bound by residues arginine 213, serine 232, and glutamine 236.

It belongs to the type-I 3-dehydroquinase family. In terms of assembly, homodimer.

The catalysed reaction is 3-dehydroquinate = 3-dehydroshikimate + H2O. Its pathway is metabolic intermediate biosynthesis; chorismate biosynthesis; chorismate from D-erythrose 4-phosphate and phosphoenolpyruvate: step 3/7. In terms of biological role, involved in the third step of the chorismate pathway, which leads to the biosynthesis of aromatic amino acids. Catalyzes the cis-dehydration of 3-dehydroquinate (DHQ) and introduces the first double bond of the aromatic ring to yield 3-dehydroshikimate. The protein is 3-dehydroquinate dehydratase of Escherichia coli O7:K1 (strain IAI39 / ExPEC).